Here is a 385-residue protein sequence, read N- to C-terminus: tRNA-specific 2-thiouridylase MnmA (385 aa).

Residues 30–37 (GMSGGVDS) and M56 contribute to the ATP site. The interaction with target base in tRNA stretch occupies residues 118 to 120 (NPD). C123 (nucleophile) is an active-site residue. C123 and C220 are disulfide-bonded. G148 contacts ATP. The interval 170-172 (KDQ) is interaction with tRNA. The active-site Cysteine persulfide intermediate is C220. Residues 332–333 (RY) are interaction with tRNA.

The protein belongs to the MnmA/TRMU family.

Its subcellular location is the cytoplasm. It carries out the reaction S-sulfanyl-L-cysteinyl-[protein] + uridine(34) in tRNA + AH2 + ATP = 2-thiouridine(34) in tRNA + L-cysteinyl-[protein] + A + AMP + diphosphate + H(+). Catalyzes the 2-thiolation of uridine at the wobble position (U34) of tRNA, leading to the formation of s(2)U34. The polypeptide is tRNA-specific 2-thiouridylase MnmA (Haemophilus influenzae (strain PittGG)).